Reading from the N-terminus, the 326-residue chain is Eukaryotic translation initiation factor 3 subunit I (326 aa).

WD repeat units follow at residues 8-47, 50-89, 145-184, 188-227, and 285-326; these read GHER…RLGT, GHQG…VIAS, MTES…KVVD, DHSA…CLKT, and GHFG…NIFE.

It belongs to the eIF-3 subunit I family. In terms of assembly, component of the eukaryotic translation initiation factor 3 (eIF-3) complex. The eIF-3 complex interacts with pix.

The protein localises to the cytoplasm. Component of the eukaryotic translation initiation factor 3 (eIF-3) complex, which is involved in protein synthesis of a specialized repertoire of mRNAs and, together with other initiation factors, stimulates binding of mRNA and methionyl-tRNAi to the 40S ribosome. The eIF-3 complex specifically targets and initiates translation of a subset of mRNAs involved in cell proliferation. The chain is Eukaryotic translation initiation factor 3 subunit I from Drosophila simulans (Fruit fly).